Reading from the N-terminus, the 95-residue chain is Aspartyl/glutamyl-tRNA(Asn/Gln) amidotransferase subunit C (95 aa).

Belongs to the GatC family. As to quaternary structure, heterotrimer of A, B and C subunits.

The catalysed reaction is L-glutamyl-tRNA(Gln) + L-glutamine + ATP + H2O = L-glutaminyl-tRNA(Gln) + L-glutamate + ADP + phosphate + H(+). The enzyme catalyses L-aspartyl-tRNA(Asn) + L-glutamine + ATP + H2O = L-asparaginyl-tRNA(Asn) + L-glutamate + ADP + phosphate + 2 H(+). Functionally, allows the formation of correctly charged Asn-tRNA(Asn) or Gln-tRNA(Gln) through the transamidation of misacylated Asp-tRNA(Asn) or Glu-tRNA(Gln) in organisms which lack either or both of asparaginyl-tRNA or glutaminyl-tRNA synthetases. The reaction takes place in the presence of glutamine and ATP through an activated phospho-Asp-tRNA(Asn) or phospho-Glu-tRNA(Gln). The polypeptide is Aspartyl/glutamyl-tRNA(Asn/Gln) amidotransferase subunit C (Marinobacter nauticus (strain ATCC 700491 / DSM 11845 / VT8) (Marinobacter aquaeolei)).